Consider the following 127-residue polypeptide: Small ribosomal subunit protein eS8 (127 aa).

The tract at residues 1–31 (MTIFQGKSGKKATGGSLKQSRKKRRFELGRE) is disordered.

Belongs to the eukaryotic ribosomal protein eS8 family. In terms of assembly, part of the 30S ribosomal subunit.

The chain is Small ribosomal subunit protein eS8 (rps8e) from Thermoplasma acidophilum (strain ATCC 25905 / DSM 1728 / JCM 9062 / NBRC 15155 / AMRC-C165).